An 87-amino-acid chain; its full sequence is Large ribosomal subunit protein bL31B (87 aa).

This sequence belongs to the bacterial ribosomal protein bL31 family. Type B subfamily. Part of the 50S ribosomal subunit.

In Burkholderia ambifaria (strain MC40-6), this protein is Large ribosomal subunit protein bL31B.